A 351-amino-acid polypeptide reads, in one-letter code: MTLSIVKSEDSSSRPSAVPSDLPLEEDIINTLPSGVFVQDRYKAWMTVIINVVMVGLGWLGIAIAPWFLLPVVWVFTGTALTGFFVIGHDCGHRSFSRNVWVNDWVGHILFLPIIYPFHSWRIGHNQHHKYTNRMELDNAWQPWRKEEYQNAGKFMQVTYDLFRGRAWWIGSILHWASIHFDWTKFEGKQRQQVKFSSLLVIGAAAIAFPTMILTIGVWGFVKFWVIPWLVFHFWMSTFTLLHHTIADIPFREPEQWHEAESQLSGTVHCNYSRWGEFLCHDINVHIPHHVTTAIPWYNLRTPTPVYRKIGGEYLYPECDFSWGLMKQVVDHAICMMRITIISQSLTTKRV.

The segment at 1–20 (MTLSIVKSEDSSSRPSAVPS) is disordered. Transmembrane regions (helical) follow at residues 44–62 (AWMT…WLGI) and 68–88 (FLLP…FVIG). Residues 89–93 (HDCGH) carry the Histidine box-1 motif. The helical transmembrane segment at 100–120 (VWVNDWVGHILFLPIIYPFHS) threads the bilayer. The Histidine box-2 motif lies at 125 to 129 (HNQHH). 2 helical membrane passes run 199 to 219 (LLVI…IGVW) and 221 to 241 (FVKF…TFTL). The Histidine box-3 signature appears at 289–293 (HHVTT).

It belongs to the fatty acid desaturase type 2 family. Requires Fe(2+) as cofactor.

The protein resides in the cellular thylakoid membrane. The enzyme catalyses a 1-[(9Z)-octadecenoyl]-2-acyl-glycerolipid + 2 reduced [2Fe-2S]-[ferredoxin] + O2 + 2 H(+) = a 1-[(9Z,12Z)-octadecdienoyl]-2-acyl-glycerolipid + 2 oxidized [2Fe-2S]-[ferredoxin] + 2 H2O. It participates in lipid metabolism; polyunsaturated fatty acid biosynthesis. Its function is as follows. Desaturase involved in fatty acid biosynthesis. Introduces a double bond at carbon 12 of oleoyl groups (18:1) attached to the sn-1 position of the glycerol moiety of membrane glycerolipids. In Arthrospira platensis (Spirulina platensis), this protein is sn-1 oleoyl-lipid 12-desaturase.